Reading from the N-terminus, the 423-residue chain is ATP-citrate synthase alpha chain protein 1 (423 aa).

Citrate-binding residues include N343, T345, and R376.

The protein belongs to the succinate/malate CoA ligase beta subunit family. As to quaternary structure, heterooctamer of 4 alpha and 4 beta chains. In terms of tissue distribution, expressed in trichomes, epidermal leaf cells, anther tapetal cells, stigma and in young vascular bundles of expanding leaves, cotyledons, roots, pedicel of flowers and siliques.

Its subcellular location is the cytoplasm. The protein localises to the cytosol. The catalysed reaction is oxaloacetate + acetyl-CoA + ADP + phosphate = citrate + ATP + CoA. Its function is as follows. ATP citrate-lyase is the primary enzyme responsible for the synthesis of cytosolic acetyl-CoA, used for the elongation of fatty acids and biosynthesis of isoprenoids, flavonoids and malonated derivatives. May supply substrate to the cytosolic acetyl-CoA carboxylase, which generates the malonyl-CoA used for the synthesis of a multitude of compounds, including very long chain fatty acids and flavonoids. Required for normal growth and development and elongation of C18 fatty acids to C20 to C24 fatty acids in seeds. In contrast to all known animal ACL enzymes having a homomeric structure, plant ACLs are composed of alpha and beta chains. The sequence is that of ATP-citrate synthase alpha chain protein 1 (ACLA-1) from Arabidopsis thaliana (Mouse-ear cress).